The chain runs to 129 residues: Protein Turandot A2 (129 aa).

Residues 1–21 (MNSSTSLMCFALLLISPLCMG) form the signal peptide. A glycan (N-linked (GlcNAc...) asparagine) is linked at Asn49.

Belongs to the Turandot family.

The protein localises to the secreted. Functionally, a humoral factor that plays a role in stress tolerance; gives increased resistance to the lethal effects of bacterial challenge and stress. Regulated by the JAK/STAT pathway and NF-KB-like Relish pathway in the fat body, upd3 in the hemocytes and Mekk1 in response to septic injury and consequent immune response. The protein is Protein Turandot A2 (TotA2) of Drosophila simulans (Fruit fly).